Consider the following 169-residue polypeptide: Translationally-controlled tumor protein homolog (169 aa).

A TCTP domain is found at 1 to 169 (MIIYKDIVSG…FKDGLEEEKF (169 aa)).

This sequence belongs to the TCTP family.

Its subcellular location is the cytoplasm. Its function is as follows. Involved in calcium binding and microtubule stabilization. This chain is Translationally-controlled tumor protein homolog, found in Branchiostoma belcheri (Amphioxus).